The chain runs to 85 residues: U4-theraphotoxin-Hhn1t (85 aa).

A signal peptide spans methionine 1–alanine 22. Residues glutamate 23 to arginine 48 constitute a propeptide that is removed on maturation. Cystine bridges form between cysteine 52–cysteine 66, cysteine 56–cysteine 77, and cysteine 71–cysteine 82.

This sequence belongs to the neurotoxin 12 (Hwtx-2) family. 02 (Hwtx-2) subfamily. Expressed by the venom gland.

Its subcellular location is the secreted. Postsynaptic neurotoxin. This is U4-theraphotoxin-Hhn1t from Cyriopagopus hainanus (Chinese bird spider).